Reading from the N-terminus, the 951-residue chain is Pheromone-regulated membrane protein 10 (951 aa).

Polar residues-rich tracts occupy residues 1 to 10 (MSSSYGNNGD), 68 to 84 (GGST…NVGS), and 92 to 104 (RTAS…NRRQ). Disordered regions lie at residues 1 to 293 (MSSS…EDPI), 313 to 366 (AGKS…TMVS), and 433 to 487 (NDSS…LPNF). Over residues 126–135 (DDDDEEEEEH) the composition is skewed to acidic residues. The segment covering 219-234 (PHQETNDGRNSAESHS) has biased composition (basic and acidic residues). Polar residues-rich tracts occupy residues 318 to 332 (PGTQ…SSEH), 354 to 366 (PFNQ…TMVS), and 468 to 484 (SQTN…SMNL). 10 helical membrane passes run 635-655 (WVSV…AFGG), 657-677 (WINM…QFIV), 687-707 (VFEV…GSIP), 711-731 (ICFG…YIIL), 753-773 (IIYS…FGWI), 786-806 (NISP…LGLI), 811-831 (WTQL…TYFS), 841-861 (FTSA…SRIW), 863-883 (GFAV…GVAS), and 918-938 (VTMI…TLFI).

The protein belongs to the ThrE exporter (TC 2.A.79) family.

The protein localises to the membrane. The polypeptide is Pheromone-regulated membrane protein 10 (Kluyveromyces lactis (strain ATCC 8585 / CBS 2359 / DSM 70799 / NBRC 1267 / NRRL Y-1140 / WM37) (Yeast)).